The sequence spans 264 residues: 3-methyl-2-oxobutanoate hydroxymethyltransferase (264 aa).

Residues Asp45 and Asp84 each contribute to the Mg(2+) site. 3-methyl-2-oxobutanoate contacts are provided by residues 45-46, Asp84, and Lys113; that span reads DS. Glu115 contributes to the Mg(2+) binding site. Glu182 serves as the catalytic Proton acceptor.

This sequence belongs to the PanB family. As to quaternary structure, homodecamer; pentamer of dimers. Requires Mg(2+) as cofactor.

Its subcellular location is the cytoplasm. It carries out the reaction 3-methyl-2-oxobutanoate + (6R)-5,10-methylene-5,6,7,8-tetrahydrofolate + H2O = 2-dehydropantoate + (6S)-5,6,7,8-tetrahydrofolate. Its pathway is cofactor biosynthesis; (R)-pantothenate biosynthesis; (R)-pantoate from 3-methyl-2-oxobutanoate: step 1/2. Catalyzes the reversible reaction in which hydroxymethyl group from 5,10-methylenetetrahydrofolate is transferred onto alpha-ketoisovalerate to form ketopantoate. In Helicobacter hepaticus (strain ATCC 51449 / 3B1), this protein is 3-methyl-2-oxobutanoate hydroxymethyltransferase.